Here is a 357-residue protein sequence, read N- to C-terminus: Peptide chain release factor 1 (357 aa).

An N5-methylglutamine modification is found at Gln-234.

Belongs to the prokaryotic/mitochondrial release factor family. Post-translationally, methylated by PrmC. Methylation increases the termination efficiency of RF1.

The protein resides in the cytoplasm. Its function is as follows. Peptide chain release factor 1 directs the termination of translation in response to the peptide chain termination codons UAG and UAA. In Lactococcus lactis subsp. cremoris (strain MG1363), this protein is Peptide chain release factor 1.